We begin with the raw amino-acid sequence, 155 residues long: Pathogenesis-related protein B (155 aa).

The protein belongs to the BetVI family.

The chain is Pathogenesis-related protein B (PCPR1-3) from Petroselinum crispum (Parsley).